The chain runs to 107 residues: Large ribosomal subunit protein uL24 (107 aa).

It belongs to the universal ribosomal protein uL24 family. As to quaternary structure, part of the 50S ribosomal subunit.

Functionally, one of two assembly initiator proteins, it binds directly to the 5'-end of the 23S rRNA, where it nucleates assembly of the 50S subunit. One of the proteins that surrounds the polypeptide exit tunnel on the outside of the subunit. The polypeptide is Large ribosomal subunit protein uL24 (Streptomyces griseus subsp. griseus (strain JCM 4626 / CBS 651.72 / NBRC 13350 / KCC S-0626 / ISP 5235)).